The primary structure comprises 229 residues: ATP synthase subunit a (229 aa).

A run of 6 helical transmembrane segments spans residues 25–45 (ADAIAYTWLIIVCLLIVSLIA), 86–106 (IATLALFVLVSNLIGLIPGFF), 111–131 (NLNTTAACAVIVFLSTHIVGI), 142–162 (FMGPIWWLAPLMFFIEIIGHL), 181–201 (LVLMIFFALAPFLVPLPMMLM), and 202–222 (GVLVSFIQAFVFMLLAMIYIQ).

Belongs to the ATPase A chain family. In terms of assembly, F-type ATPases have 2 components, CF(1) - the catalytic core - and CF(0) - the membrane proton channel. CF(1) has five subunits: alpha(3), beta(3), gamma(1), delta(1), epsilon(1). CF(0) has three main subunits: a(1), b(2) and c(9-12). The alpha and beta chains form an alternating ring which encloses part of the gamma chain. CF(1) is attached to CF(0) by a central stalk formed by the gamma and epsilon chains, while a peripheral stalk is formed by the delta and b chains.

Its subcellular location is the cell inner membrane. Its function is as follows. Key component of the proton channel; it plays a direct role in the translocation of protons across the membrane. This Geobacter sulfurreducens (strain ATCC 51573 / DSM 12127 / PCA) protein is ATP synthase subunit a.